The sequence spans 507 residues: ATP synthase subunit alpha, chloroplastic (507 aa).

An ATP-binding site is contributed by 170–177; that stretch reads GDRQTGKT.

The protein belongs to the ATPase alpha/beta chains family. In terms of assembly, F-type ATPases have 2 components, CF(1) - the catalytic core - and CF(0) - the membrane proton channel. CF(1) has five subunits: alpha(3), beta(3), gamma(1), delta(1), epsilon(1). CF(0) has four main subunits: a, b, b' and c.

The protein resides in the plastid. Its subcellular location is the chloroplast thylakoid membrane. The enzyme catalyses ATP + H2O + 4 H(+)(in) = ADP + phosphate + 5 H(+)(out). Functionally, produces ATP from ADP in the presence of a proton gradient across the membrane. The alpha chain is a regulatory subunit. This Amborella trichopoda protein is ATP synthase subunit alpha, chloroplastic.